Reading from the N-terminus, the 137-residue chain is NADH-quinone oxidoreductase subunit A 1 (137 aa).

3 helical membrane passes run 14–34, 66–86, and 95–115; these read FAAF…VSAL, FYLV…LFAW, and WAGL…LVYL.

It belongs to the complex I subunit 3 family. As to quaternary structure, NDH-1 is composed of 13 different subunits. Subunits NuoA, H, J, K, L, M, N constitute the membrane sector of the complex.

The protein resides in the cell inner membrane. The enzyme catalyses a quinone + NADH + 5 H(+)(in) = a quinol + NAD(+) + 4 H(+)(out). Its function is as follows. NDH-1 shuttles electrons from NADH, via FMN and iron-sulfur (Fe-S) centers, to quinones in the respiratory chain. The immediate electron acceptor for the enzyme in this species is believed to be ubiquinone. Couples the redox reaction to proton translocation (for every two electrons transferred, four hydrogen ions are translocated across the cytoplasmic membrane), and thus conserves the redox energy in a proton gradient. This is NADH-quinone oxidoreductase subunit A 1 from Pseudomonas paraeruginosa (strain DSM 24068 / PA7) (Pseudomonas aeruginosa (strain PA7)).